A 137-amino-acid chain; its full sequence is Ubiquitin-conjugating enzyme variant MMS2 (137 aa).

Residues 5 to 137 (PRNFRLLEEL…LRQPKEGETF (133 aa)) enclose the UBC core domain. At Ser-71 the chain carries Phosphoserine.

The protein belongs to the ubiquitin-conjugating enzyme family. As to quaternary structure, heterodimer with UBC13.

In terms of biological role, has a role in the DNA error-free postreplication repair (PRR) pathway. Lacks catalytic activity by itself. The UBC13/MMS2 heterodimer catalyzes the synthesis of non-canonical poly-ubiquitin chains that are linked through 'Lys-63'. This is Ubiquitin-conjugating enzyme variant MMS2 (MMS2) from Saccharomyces cerevisiae (strain ATCC 204508 / S288c) (Baker's yeast).